The chain runs to 358 residues: Protein phosphatase 1 regulatory subunit 3G (358 aa).

A disordered region spans residues 1-71; that stretch reads MEPIGARLSL…KEEAAPQEQE (71 aa). The span at 11–29 shows a compositional bias: low complexity; the sequence is EAPGPAPFREAPPAEELPA. Ser-86 is subject to Phosphoserine. The region spanning 210 to 350 is the CBM21 domain; it reads AERLQRQRVC…NNAGANYTLR (141 aa). A compositionally biased stretch (low complexity) spans 270 to 280; the sequence is EPLEPQQPEAP. The disordered stretch occupies residues 270–295; that stretch reads EPLEPQQPEAPSGASEPGSGDAKKEP.

Glycogen-targeting subunit for protein phosphatase 1 (PP1). Involved in the regulation of hepatic glycogenesis in a manner coupled to the fasting-feeding cycle and distinct from other glycogen-targeting subunits. This chain is Protein phosphatase 1 regulatory subunit 3G (PPP1R3G), found in Homo sapiens (Human).